The following is a 478-amino-acid chain: UBP1-associated protein 2A (478 aa).

The tract at residues 1 to 99 (MTKKRKLEGE…NQEDDDDEPI (99 aa)) is disordered. Positions 41–75 (GDVEEVEYEEVEEEQEEEVEDDDDEDDGDENEDQT) are enriched in acidic residues. RRM domains follow at residues 140-217 (RKIF…LASK) and 245-328 (KKIY…KPGK). Disordered regions lie at residues 321-359 (IDGPKPGKQQQHHHNPHAYNNPRYQRNDNNGYGPPGGHG) and 442-478 (GTQPGLQGGYQTPQPGQGGTSRGQHGVGPYGTPYMGH). Residues 442 to 456 (GTQPGLQGGYQTPQP) show a composition bias toward low complexity. Residues 457–470 (GQGGTSRGQHGVGP) are compositionally biased toward gly residues.

As to quaternary structure, interacts with UBA1A, UBA2A, UBP1A, UBP1B, UBP1C and SRK2E. As to expression, expressed in young leaves, flowers and embryos.

It is found in the nucleus. Heterogeneous nuclear ribonucleoprotein (hnRNP)-like protein that acts as a component of a complex regulating the turnover of mRNAs in the nucleus. Binds with high affinity to RNA molecules that contain U-rich sequences in 3'-UTRs. May function in complex with UBP1 and contribute to the stabilization of mRNAs in the nucleus. However, unlike UBP1, UBA2A does not stimulate pre-mRNA splicing. This Arabidopsis thaliana (Mouse-ear cress) protein is UBP1-associated protein 2A (UBA2A).